Reading from the N-terminus, the 1224-residue chain is Cytosolic carboxypeptidase 1 (1224 aa).

The tract at residues 361-398 (PPDVDDVVDESDDNDDAETESEIETEDDKDQNFKNDDI) is disordered. A compositionally biased stretch (acidic residues) spans 363 to 389 (DVDDVVDESDDNDDAETESEIETEDDK). Positions 846-1136 (YPYTYSTLKM…KFCVGLLRLK (291 aa)) constitute a Peptidase M14 domain. Residues histidine 918, glutamate 921, and histidine 1015 each coordinate Zn(2+). Glutamate 1100 serves as the catalytic Proton donor/acceptor. Acidic residues predominate over residues 1186–1197 (SAESNDDQDAEL). A disordered region spans residues 1186 to 1224 (SAESNDDQDAELADNVGDYEANNQEDGLSDSDSTRILLS). Residues 1206–1224 (ANNQEDGLSDSDSTRILLS) show a composition bias toward polar residues.

Belongs to the peptidase M14 family. The cofactor is Zn(2+).

It is found in the cytoplasm. The protein resides in the cytosol. Its subcellular location is the nucleus. It localises to the mitochondrion. It carries out the reaction (L-glutamyl)(n+1)-gamma-L-glutamyl-L-glutamyl-[protein] + H2O = (L-glutamyl)(n)-gamma-L-glutamyl-L-glutamyl-[protein] + L-glutamate. It catalyses the reaction C-terminal L-alpha-aminoacyl-L-glutamyl-L-glutamyl-[tubulin] + H2O = C-terminal L-alpha-aminoacyl-L-glutamyl-[tubulin] + L-glutamate. In terms of biological role, metallocarboxypeptidase that mediates protein deglutamylation of tubulin and non-tubulin target proteins. Catalyzes the removal of polyglutamate side chains present on the gamma-carboxyl group of glutamate residues within the C-terminal tail of alpha- and beta-tubulin. Specifically cleaves tubulin long-side-chains, while it is not able to remove the branching point glutamate. Also catalyzes the removal of polyglutamate residues from the carboxy-terminus of alpha-tubulin as well as non-tubulin proteins. The polypeptide is Cytosolic carboxypeptidase 1 (AGTPBP1) (Gallus gallus (Chicken)).